We begin with the raw amino-acid sequence, 148 residues long: Glutamyl-tRNA(Gln) amidotransferase subunit C, mitochondrial (148 aa).

It belongs to the GatC family. As to quaternary structure, subunit of the heterotrimeric GatCAB amidotransferase (AdT) complex, composed of A, B and C subunits.

It localises to the mitochondrion. The enzyme catalyses L-glutamyl-tRNA(Gln) + L-glutamine + ATP + H2O = L-glutaminyl-tRNA(Gln) + L-glutamate + ADP + phosphate + H(+). Allows the formation of correctly charged Gln-tRNA(Gln) through the transamidation of misacylated Glu-tRNA(Gln) in the mitochondria. The reaction takes place in the presence of glutamine and ATP through an activated gamma-phospho-Glu-tRNA(Gln). This is Glutamyl-tRNA(Gln) amidotransferase subunit C, mitochondrial from Drosophila simulans (Fruit fly).